A 187-amino-acid chain; its full sequence is UPF0301 protein VV2869 (187 aa).

The protein belongs to the UPF0301 (AlgH) family.

The chain is UPF0301 protein VV2869 from Vibrio vulnificus (strain YJ016).